The following is a 549-amino-acid chain: Cation/acetate symporter ActP (549 aa).

Transmembrane regions (helical) follow at residues Trp-33 to Ala-53, Leu-77 to Phe-97, Gly-103 to Glu-123, Ile-148 to Gly-168, Ile-183 to Ala-203, Trp-206 to Val-226, Ile-262 to Leu-282, Gly-303 to Val-323, Leu-355 to Leu-375, Val-404 to Glu-424, Ile-428 to Leu-448, Gly-464 to Val-484, and Ile-493 to Phe-513.

It belongs to the sodium:solute symporter (SSF) (TC 2.A.21) family.

Its subcellular location is the cell inner membrane. Transports acetate. The chain is Cation/acetate symporter ActP from Salmonella paratyphi C (strain RKS4594).